A 561-amino-acid polypeptide reads, in one-letter code: Solute carrier family 41 member 2 (561 aa).

At 1 to 150 (MTANTGEPYK…KESSIAMALQ (150 aa)) the chain is on the extracellular side. Residues 151–171 (ILVPFLLAGFGTVSAGMVLDI) form a helical membrane-spanning segment. The Cytoplasmic segment spans residues 172-183 (VQHWDVFKNLTE). The chain crosses the membrane as a helical span at residues 184-204 (VFILVPALLGLKGNLEMTLAS). The Extracellular segment spans residues 205-233 (RLSTAVNVGKMDSPIEKWNLIIGNLALKQ). A helical transmembrane segment spans residues 234–254 (VQATVVGFLAAVFAVILGWIP). Over 255–270 (DGKYQLDHAILLCSSS) the chain is Cytoplasmic. The chain crosses the membrane as a helical span at residues 271-291 (VATAFIASLLQGIIMVGVIVG). Over 292–301 (SKKTGINPDN) the chain is Extracellular. Residues 302–322 (VATPIAASFGDLITLAILAWI) form a helical membrane-spanning segment. Residues 323–333 (SQGLYNCLGSY) lie on the Cytoplasmic side of the membrane. A helical transmembrane segment spans residues 334-354 (AFVSPLVGVFFLAMTPIWIVI). At 355–364 (ASKHPATRTV) the chain is on the extracellular side. The helical transmembrane segment at 365 to 385 (LHSGWEPVITAMLISSIGGLI) threads the bilayer. Residues 386–394 (LDTTVSDPN) are Cytoplasmic-facing. Residues 395 to 415 (LVGIVVYTPVINGIGGNLVAI) traverse the membrane as a helical segment. Over 416–457 (QASRISTYLHLYSIPGELPEDAKGCYHPCRTFCGTGVNNKSA) the chain is Extracellular. The helical transmembrane segment at 458 to 478 (QVLLSLVIPGHLIFLYTIYLM) threads the bilayer. Over 479-487 (KSGHTSLTP) the chain is Cytoplasmic. Residues 488 to 508 (IFVAVYLLAALLQVFALLWIA) form a helical membrane-spanning segment. Residues 509-531 (DWMVHHIWRKGKDPDSFSIPYLT) are Extracellular-facing. The helical transmembrane segment at 532 to 552 (ALGDLLGTALLAISFHILWII) threads the bilayer. Over 553–561 (GDRDGDVGD) the chain is Cytoplasmic.

It belongs to the SLC41A transporter family.

Its subcellular location is the cell membrane. The enzyme catalyses Mg(2+)(in) = Mg(2+)(out). It catalyses the reaction Mn(2+)(in) = Mn(2+)(out). It carries out the reaction Co(2+)(in) = Co(2+)(out). The catalysed reaction is Ni(2+)(in) = Ni(2+)(out). The enzyme catalyses Fe(2+)(in) = Fe(2+)(out). Functionally, acts as a plasma-membrane magnesium transporter. Can also mediate the transport of other divalent metal cations in an order of Ba(2+) &gt; Ni(2+) &gt; Co(2+) &gt; Fe(2+) &gt; Mn(2+). This Xenopus laevis (African clawed frog) protein is Solute carrier family 41 member 2 (slc41a2).